Here is a 158-residue protein sequence, read N- to C-terminus: Single-stranded DNA-binding protein 2 (158 aa).

The region spanning 1–107 (MNETIVCVVG…IDALAVGHDL (107 aa)) is the SSB domain. The interval 109–158 (RGTSAFRRPSAKDGEAGVSPAARPEPNWETEPGSQPSVEHQPQPEPAGVT) is disordered.

As to quaternary structure, homotetramer.

This Streptomyces avermitilis (strain ATCC 31267 / DSM 46492 / JCM 5070 / NBRC 14893 / NCIMB 12804 / NRRL 8165 / MA-4680) protein is Single-stranded DNA-binding protein 2 (ssb2).